The sequence spans 1015 residues: Cytosolic carboxypeptidase 1 (1015 aa).

Positions 384–462 (LPTATPSTPG…GALPKTTRLN (79 aa)) are disordered. The segment covering 416 to 451 (EDGMDEEDEAFVRDDDDEGKDDRGSDDDDGKDDDEI) has biased composition (acidic residues). In terms of domain architecture, Peptidase M14 spans 727-1013 (YPYTYSFLNS…DLLHSFLEMT (287 aa)). Zn(2+) contacts are provided by H792, E795, and H891. E977 functions as the Proton donor/acceptor in the catalytic mechanism.

The protein belongs to the peptidase M14 family. Requires Zn(2+) as cofactor. In terms of tissue distribution, in hermaphrodites and males, expressed in amphid and IL2 ciliated sensory neurons. In males, expressed in CEM head neurons, RnB and HOB tail neurons, and in gubernacular erector and retractor muscles.

The protein resides in the perikaryon. It is found in the cell projection. Its subcellular location is the cilium. It localises to the dendrite. In terms of biological role, catalyzes the deglutamylation of polyglutamate side chains generated by post-translational polyglutamylation of proteins such as tubulins. Via the deglutamylation of tubulin, regulates the localization and velocity of kinesin motors and the structural integrity of microtubules in sensory cilia. In male CEM sensory neurons, regulates the cilia release of bioactive extracellular vesicles. Also regulates microtubule dynamics in uterine muscle cells. The protein is Cytosolic carboxypeptidase 1 of Caenorhabditis elegans.